Here is a 1035-residue protein sequence, read N- to C-terminus: Retinoblastoma-related protein (1035 aa).

Residues 403–426 (ITSPLSPHRSPASHANGIPGSANS) form a disordered region. Residues 431–632 (TPVSTAMTTA…EKGSSLYNSL (202 aa)) form a domain A region. The pocket stretch occupies residues 431-885 (TPVSTAMTTA…NEIFIPAAKP (455 aa)). The spacer stretch occupies residues 633–753 (TVARPALSAE…PGGGGETCAE (121 aa)). Disordered stretches follow at residues 674–697 (PSLQ…PKRP) and 721–748 (GNLK…GGGG). The tract at residues 754–885 (TGINVFFTKI…NEIFIPAAKP (132 aa)) is domain B.

The protein belongs to the retinoblastoma protein (RB) family.

The protein resides in the nucleus. In terms of biological role, regulator of biological processes that recruits a histone deacetylase to control gene transcription. May play a role in the entry into mitosis, negatively regulating the cell proliferation. Formation of stable complexes with geminiviridae replication-associated proteins may create a cellular environment which favors viral DNA replication. The chain is Retinoblastoma-related protein (RBL901) from Populus trichocarpa (Western balsam poplar).